The primary structure comprises 104 residues: L-rhamnose mutarotase (104 aa).

Y18 contacts substrate. H22 serves as the catalytic Proton donor. Substrate is bound by residues Y41 and 76–77; that span reads WW.

The protein belongs to the rhamnose mutarotase family. In terms of assembly, homodimer.

It is found in the cytoplasm. It carries out the reaction alpha-L-rhamnose = beta-L-rhamnose. It functions in the pathway carbohydrate metabolism; L-rhamnose metabolism. Functionally, involved in the anomeric conversion of L-rhamnose. The sequence is that of L-rhamnose mutarotase from Sinorhizobium medicae (strain WSM419) (Ensifer medicae).